The chain runs to 312 residues: MSKLSTTKICVKSPAKINLHLEIIGKRKDGYHELAMIMQNIDLSDYIEFENNQIGEIKLKSNSKDLSLDEDNLIIKAANYIKDMSKNKELGANIFLKKNIPIGAGLAGGSSNAAATLVGLNKLWDLDLDYETIFILSAKLGSDVPFFIEGGCQFCFGRGEILEKYSSNFDFGVILLKNPNISISTVDTYKKYSQEFCPKYFTETEKTNKIRNDLRVNGFNDFKLSEQRINVKNDLQVIVERENNSVKKALYLLSNLQNCLSYSMSGSGPTCFALFKDINIANEVFEQNYKMFNNNGFEAWVCKLINSGITLL.

Lys-16 is an active-site residue. Residue 101–111 (PIGAGLAGGSS) coordinates ATP. Residue Asp-143 is part of the active site.

This sequence belongs to the GHMP kinase family. IspE subfamily.

It carries out the reaction 4-CDP-2-C-methyl-D-erythritol + ATP = 4-CDP-2-C-methyl-D-erythritol 2-phosphate + ADP + H(+). It participates in isoprenoid biosynthesis; isopentenyl diphosphate biosynthesis via DXP pathway; isopentenyl diphosphate from 1-deoxy-D-xylulose 5-phosphate: step 3/6. Catalyzes the phosphorylation of the position 2 hydroxy group of 4-diphosphocytidyl-2C-methyl-D-erythritol. This is 4-diphosphocytidyl-2-C-methyl-D-erythritol kinase from Prochlorococcus marinus subsp. pastoris (strain CCMP1986 / NIES-2087 / MED4).